A 1722-amino-acid chain; its full sequence is Signal-induced proliferation-associated 1-like protein 2 (1722 aa).

Disordered regions lie at residues 1–29 (MSDP…RAMQ) and 45–73 (MGPA…PAVP). The span at 57-66 (EGGGGGGGPA) shows a compositional bias: gly residues. Phosphoserine is present on residues S149, S380, and S384. The segment at 362 to 404 (ASAASQTPVPVGPAGGCESPLGSKEDLNAKENPDADEGDGKSN) is disordered. Basic and acidic residues predominate over residues 384 to 403 (SKEDLNAKENPDADEGDGKS). The region spanning 596 to 813 (LLKLDEQGLS…RTRHEYLKDL (218 aa)) is the Rap-GAP domain. Positions 951–1027 (EMTLRRNGLG…VKVVIIQPHE (77 aa)) constitute a PDZ domain. Phosphoserine is present on S1030. Disordered regions lie at residues 1068-1172 (HRVP…DHED), 1197-1246 (ERAL…FGSG), and 1328-1361 (AADG…KSTG). Low complexity-rich tracts occupy residues 1091–1103 (LQCQ…AQAA) and 1120–1131 (SSPSNQSSSSDP). The segment covering 1197-1218 (ERALQKDGSCKDSPNKLSHIGD) has biased composition (basic and acidic residues). The span at 1220-1237 (SCSSHSSSNTLSSNTSSN) shows a compositional bias: low complexity. S1245 is subject to Phosphoserine. The segment covering 1328-1355 (AADGSMGDLSEVSSHSSGSHRSGSPSTH) has biased composition (low complexity). Residues S1461, S1472, S1478, S1488, S1549, S1552, and S1591 each carry the phosphoserine modification. Residues 1652 to 1712 (STLTGKVNQL…ATAQLRTFTE (61 aa)) are a coiled coil.

The sequence is that of Signal-induced proliferation-associated 1-like protein 2 (Sipa1l2) from Rattus norvegicus (Rat).